Reading from the N-terminus, the 664-residue chain is Methionine--tRNA ligase (664 aa).

A 'HIGH' region motif is present at residues 15 to 25; it reads YYPSGKAHIGH. Positions 310–314 match the 'KMSKS' region motif; sequence KMSKS. K313 provides a ligand contact to ATP. In terms of domain architecture, tRNA-binding spans 563 to 664; sequence DFDKIDLRVA…SALPNGAKVK (102 aa).

The protein belongs to the class-I aminoacyl-tRNA synthetase family. MetG type 2B subfamily. In terms of assembly, homodimer.

Its subcellular location is the cytoplasm. The enzyme catalyses tRNA(Met) + L-methionine + ATP = L-methionyl-tRNA(Met) + AMP + diphosphate. Is required not only for elongation of protein synthesis but also for the initiation of all mRNA translation through initiator tRNA(fMet) aminoacylation. This Listeria monocytogenes serovar 1/2a (strain ATCC BAA-679 / EGD-e) protein is Methionine--tRNA ligase (metG).